Consider the following 115-residue polypeptide: Virulence-associated protein A' (115 aa).

Positions 16 to 70 constitute an HTH cro/C1-type domain; it reads IKSDLDGLGINITEAAKALDVTRAALSEIINGKRGISAKMAWKLSKAFTNSDPEF. A DNA-binding region (H-T-H motif) is located at residues 27–46; sequence ITEAAKALDVTRAALSEIIN.

It belongs to the VapA/VapI family.

This Dichelobacter nodosus (Bacteroides nodosus) protein is Virulence-associated protein A' (vapA').